We begin with the raw amino-acid sequence, 135 residues long: uncharacterized protein (135 aa).

This is an uncharacterized protein from Mycoplasma pneumoniae (strain ATCC 29342 / M129 / Subtype 1) (Mycoplasmoides pneumoniae).